The following is a 372-amino-acid chain: Cytochrome b (372 aa).

Helical transmembrane passes span 25 to 45 (FGSM…FLAI), 69 to 90 (WIMQ…YTHI), 105 to 125 (WLSG…GYVL), and 170 to 190 (FFAL…IHIM). Residues His-75 and His-89 each coordinate heme b. Heme b is bound by residues His-174 and His-188. His-193 is an a ubiquinone binding site. 4 helical membrane-spanning segments follow: residues 218 to 238 (YKDM…MSFM), 280 to 300 (LGGT…PFTH), 312 to 332 (ITQV…WTAT), and 339 to 358 (FILI…IIHP).

The protein belongs to the cytochrome b family. In terms of assembly, the cytochrome bc1 complex contains 3 respiratory subunits (MT-CYB, CYC1 and UQCRFS1), 2 core proteins (UQCRC1 and UQCRC2) and probably 6 low-molecular weight proteins. It depends on heme b as a cofactor.

The protein resides in the mitochondrion inner membrane. Component of the ubiquinol-cytochrome c reductase complex (complex III or cytochrome b-c1 complex) that is part of the mitochondrial respiratory chain. The b-c1 complex mediates electron transfer from ubiquinol to cytochrome c. Contributes to the generation of a proton gradient across the mitochondrial membrane that is then used for ATP synthesis. In Pseudechis australis (Mulga snake), this protein is Cytochrome b (MT-CYB).